Reading from the N-terminus, the 184-residue chain is Oligoribonuclease (184 aa).

In terms of domain architecture, Exonuclease spans 7 to 170; that stretch reads LIWIDLEMTG…DDIRESVAEL (164 aa). Tyr128 is a catalytic residue.

This sequence belongs to the oligoribonuclease family.

Its subcellular location is the cytoplasm. In terms of biological role, 3'-to-5' exoribonuclease specific for small oligoribonucleotides. This is Oligoribonuclease from Baumannia cicadellinicola subsp. Homalodisca coagulata.